Here is a 133-residue protein sequence, read N- to C-terminus: Small ribosomal subunit protein uS8 (133 aa).

Belongs to the universal ribosomal protein uS8 family. Part of the 30S ribosomal subunit. Contacts proteins S5 and S12.

Its function is as follows. One of the primary rRNA binding proteins, it binds directly to 16S rRNA central domain where it helps coordinate assembly of the platform of the 30S subunit. In Anaplasma phagocytophilum (strain HZ), this protein is Small ribosomal subunit protein uS8.